Reading from the N-terminus, the 303-residue chain is Methionyl-tRNA formyltransferase (303 aa).

108-111 (SDLP) lines the (6S)-5,6,7,8-tetrahydrofolate pocket.

The protein belongs to the Fmt family.

It catalyses the reaction L-methionyl-tRNA(fMet) + (6R)-10-formyltetrahydrofolate = N-formyl-L-methionyl-tRNA(fMet) + (6S)-5,6,7,8-tetrahydrofolate + H(+). Attaches a formyl group to the free amino group of methionyl-tRNA(fMet). The formyl group appears to play a dual role in the initiator identity of N-formylmethionyl-tRNA by promoting its recognition by IF2 and preventing the misappropriation of this tRNA by the elongation apparatus. The polypeptide is Methionyl-tRNA formyltransferase (Rickettsia africae (strain ESF-5)).